The primary structure comprises 358 residues: Hsp70/Hsp90 co-chaperone cns1 (358 aa).

4 TPR repeats span residues 64–97, 102–135, 136–169, and 221–255; these read AQNFREHGNECFASKRYKDAEEFYTKALAQKCGD, IACYSNRAACNLLFENYRQVLNDCAQVLQRDSTH, AKAYYRSAKALVALKRYDEAKECIRLCSLVHPND, and TEHPPDLGDAMISLSTFDDPKSELFFPTILLYPLV.

This sequence belongs to the TTC4 family. As to quaternary structure, monomer. Component of Hsp70 and Hsp90 chaperone complexes.

The protein localises to the cytoplasm. The protein resides in the nucleus. Functionally, co-chaperone that binds to the molecular chaperones Hsp90 and Hsp70. Stimulates Hsp70 ATPase activity, but not Hsp90 ATPase activity. Involved in only a subset of Hsp90 functions. The protein is Hsp70/Hsp90 co-chaperone cns1 (cns1) of Schizosaccharomyces pombe (strain 972 / ATCC 24843) (Fission yeast).